Reading from the N-terminus, the 153-residue chain is Mediator of RNA polymerase II transcription subunit 22 (153 aa).

This sequence belongs to the Mediator complex subunit 22 family. Component of the Mediator complex.

It is found in the nucleus. Component of the Mediator complex, a coactivator involved in the regulated transcription of nearly all RNA polymerase II-dependent genes. Mediator functions as a bridge to convey information from gene-specific regulatory proteins to the basal RNA polymerase II transcription machinery. Mediator is recruited to promoters by direct interactions with regulatory proteins and serves as a scaffold for the assembly of a functional preinitiation complex with RNA polymerase II and the general transcription factors. In Caenorhabditis briggsae, this protein is Mediator of RNA polymerase II transcription subunit 22 (mdt-22).